Consider the following 513-residue polypeptide: MSDKLIIFDTTLRDGEQSPGASMTREEKIRIARQLERLKVDVIEAGFAASSNGDFEAIRSIAQVVKDSTICSLARANDKDIARAAEALKPANSFRIHTFIATSALHMEKKLRMTPDEVYQQARLAVRFARQFTDDIEFSPEDGSRSDMDFLCRVLEGVIAEGATTINLPDTVGYAVPEGYAELIRSVRERIPNSDKAIWSVHCHNDLGMAVANSLAAVKMAGARQIECTINGLGERAGNTSLEEVVMAVKTRRDYFDLDIGVDTTQIVPASKLVSQITGFVVQPNKAVVGANAFAHASGIHQDGVLKARDTYEIMRAEDVGWSANKIVLGKLSGRNAFKQRLQELGIELESETEVNAAFTRFKELADQKAEIFDEDIVAIVSNEAQHDANEHFRFISLSQRSETGERPHARVVFSMDGQEQSGEGEGNGPVDATLHAIESRVSSGAEMVLYSVNAITGGTEAQGEVTVRLSKAGRIVNGVGTDPDIVAASAKAYLAALNKLHDKAVQKINPQI.

One can recognise a Pyruvate carboxyltransferase domain in the interval 5-268 (LIIFDTTLRD…DIGVDTTQIV (264 aa)). Mn(2+)-binding residues include aspartate 14, histidine 202, histidine 204, and asparagine 239. The tract at residues 394–513 (RFISLSQRSE…KAVQKINPQI (120 aa)) is regulatory domain.

This sequence belongs to the alpha-IPM synthase/homocitrate synthase family. LeuA type 1 subfamily. Homodimer. Requires Mn(2+) as cofactor.

It localises to the cytoplasm. It carries out the reaction 3-methyl-2-oxobutanoate + acetyl-CoA + H2O = (2S)-2-isopropylmalate + CoA + H(+). It participates in amino-acid biosynthesis; L-leucine biosynthesis; L-leucine from 3-methyl-2-oxobutanoate: step 1/4. In terms of biological role, catalyzes the condensation of the acetyl group of acetyl-CoA with 3-methyl-2-oxobutanoate (2-ketoisovalerate) to form 3-carboxy-3-hydroxy-4-methylpentanoate (2-isopropylmalate). This is 2-isopropylmalate synthase from Cupriavidus necator (strain ATCC 17699 / DSM 428 / KCTC 22496 / NCIMB 10442 / H16 / Stanier 337) (Ralstonia eutropha).